The chain runs to 343 residues: 3-hydroxy-3-methylglutaryl-CoA lyase, cytoplasmic (343 aa).

Gly2 carries N-myristoyl glycine lipidation. Residues 48 to 315 (VKIVEVGPRD…NTGVDLYKVM (268 aa)) enclose the Pyruvate carboxyltransferase domain. Position 56 (Arg56) interacts with substrate. Positions 57, 248, and 250 each coordinate a divalent metal cation. Cys281 is a catalytic residue. Asn290 lines the a divalent metal cation pocket.

It belongs to the HMG-CoA lyase family. Requires a divalent metal cation as cofactor.

The protein localises to the cytoplasm. Its subcellular location is the cytosol. It localises to the endoplasmic reticulum membrane. It catalyses the reaction (3S)-3-hydroxy-3-methylglutaryl-CoA = acetoacetate + acetyl-CoA. It participates in metabolic intermediate metabolism; (S)-3-hydroxy-3-methylglutaryl-CoA degradation; acetoacetate from (S)-3-hydroxy-3-methylglutaryl-CoA: step 1/1. Functionally, non-mitochondrial 3-hydroxy-3-methylglutaryl-CoA lyase that catalyzes a cation-dependent cleavage of (S)-3-hydroxy-3-methylglutaryl-CoA into acetyl-CoA and acetoacetate, a key step in ketogenesis, the products of which support energy production in nonhepatic animal tissues. The chain is 3-hydroxy-3-methylglutaryl-CoA lyase, cytoplasmic (Hmgcll1) from Mus musculus (Mouse).